Here is a 477-residue protein sequence, read N- to C-terminus: MESFDADTNSTDLHSRPLFQPQDIASMVILGLTCLLGLLGNGLVLWVAGVKMKTTVNTVWFLHLTLADFLCCLSLPFSLAHLILQGHWPYGLFLCKLIPSIIILNMFASVFLLTAISLDRCLIVHKPIWCQNHRNVRTAFAICGCVWVVAFVMCVPVFVYRDLFIMDNRSICRYNFDSSRSYDYWDYVYKLSLPESNSTDNSTAQLTGHMNDRSAPSSVQARDYFWTVTTALQSQPFLTSPEDSFSLDSANQQPHYGGKPPNVLTAAVPSGFPVEDRKSNTLNADAFLSAHTELFPTASSGHLYPYDFQGDYVDQFTYDNHVPTPLMAITITRLVVGFLVPFFIMVICYSLIVFRMRKTNFTKSRNKTFRVAVAVVTVFFICWTPYHLVGVLLLITDPESSLGEAVMSWDHMSIALASANSCFNPFLYALLGKDFRKKARQSIKGILEAAFSEELTHSTNCTQDKASSKRNNMSTDV.

Topologically, residues 1–23 are extracellular; that stretch reads MESFDADTNSTDLHSRPLFQPQD. The N-linked (GlcNAc...) asparagine glycan is linked to asparagine 9. Residues 24–46 traverse the membrane as a helical segment; it reads IASMVILGLTCLLGLLGNGLVLW. The Cytoplasmic segment spans residues 47–57; sequence VAGVKMKTTVN. The helical transmembrane segment at 58–80 threads the bilayer; it reads TVWFLHLTLADFLCCLSLPFSLA. The Extracellular portion of the chain corresponds to 81–96; it reads HLILQGHWPYGLFLCK. Cysteine 95 and cysteine 172 are joined by a disulfide. Residues 97-118 traverse the membrane as a helical segment; sequence LIPSIIILNMFASVFLLTAISL. The Cytoplasmic segment spans residues 119–139; that stretch reads DRCLIVHKPIWCQNHRNVRTA. The helical transmembrane segment at 140–160 threads the bilayer; that stretch reads FAICGCVWVVAFVMCVPVFVY. Over 161–333 the chain is Extracellular; that stretch reads RDLFIMDNRS…TPLMAITITR (173 aa). N-linked (GlcNAc...) asparagine glycosylation occurs at asparagine 168. 2 positions are modified to sulfotyrosine: tyrosine 174 and tyrosine 184. N-linked (GlcNAc...) asparagine glycosylation is found at asparagine 197 and asparagine 201. Tyrosine 312 carries the sulfotyrosine modification. Residues 334 to 353 traverse the membrane as a helical segment; sequence LVVGFLVPFFIMVICYSLIV. Residues 354-370 lie on the Cytoplasmic side of the membrane; sequence FRMRKTNFTKSRNKTFR. A helical membrane pass occupies residues 371–393; the sequence is VAVAVVTVFFICWTPYHLVGVLL. Over 394–410 the chain is Extracellular; sequence LITDPESSLGEAVMSWD. Residues 411–431 form a helical membrane-spanning segment; sequence HMSIALASANSCFNPFLYALL. Residues 432–477 are Cytoplasmic-facing; the sequence is GKDFRKKARQSIKGILEAAFSEELTHSTNCTQDKASSKRNNMSTDV. Serine 452 is modified (phosphoserine). A Phosphothreonine modification is found at threonine 456.

The protein belongs to the G-protein coupled receptor 1 family. Interacts with VGF-derived peptide TLQP-21. As to expression, detected in varying levels in all tissues examined except the spleen. Especially abundant in heart and lung.

The protein localises to the cell membrane. Its function is as follows. Receptor for the chemotactic and inflammatory peptide anaphylatoxin C3a. This receptor stimulates chemotaxis, granule enzyme release and superoxide anion production. The polypeptide is C3a anaphylatoxin chemotactic receptor (C3ar1) (Mus musculus (Mouse)).